The chain runs to 152 residues: Ribosomal RNA large subunit methyltransferase H (152 aa).

Residues Leu68, Gly100, and 119 to 124 contribute to the S-adenosyl-L-methionine site; that span reads FGRMTW.

Belongs to the RNA methyltransferase RlmH family. As to quaternary structure, homodimer.

Its subcellular location is the cytoplasm. The enzyme catalyses pseudouridine(1915) in 23S rRNA + S-adenosyl-L-methionine = N(3)-methylpseudouridine(1915) in 23S rRNA + S-adenosyl-L-homocysteine + H(+). In terms of biological role, specifically methylates the pseudouridine at position 1915 (m3Psi1915) in 23S rRNA. This Paramagnetospirillum magneticum (strain ATCC 700264 / AMB-1) (Magnetospirillum magneticum) protein is Ribosomal RNA large subunit methyltransferase H.